The chain runs to 544 residues: Light-independent protochlorophyllide reductase subunit B (544 aa).

Aspartate 36 serves as a coordination point for [4Fe-4S] cluster. Catalysis depends on aspartate 286, which acts as the Proton donor. Residue 421-422 (GM) participates in substrate binding.

The protein belongs to the ChlB/BchB/BchZ family. Protochlorophyllide reductase is composed of three subunits; BchL, BchN and BchB. Forms a heterotetramer of two BchB and two BchN subunits. [4Fe-4S] cluster is required as a cofactor.

It carries out the reaction chlorophyllide a + oxidized 2[4Fe-4S]-[ferredoxin] + 2 ADP + 2 phosphate = protochlorophyllide a + reduced 2[4Fe-4S]-[ferredoxin] + 2 ATP + 2 H2O. The protein operates within porphyrin-containing compound metabolism; bacteriochlorophyll biosynthesis (light-independent). Component of the dark-operative protochlorophyllide reductase (DPOR) that uses Mg-ATP and reduced ferredoxin to reduce ring D of protochlorophyllide (Pchlide) to form chlorophyllide a (Chlide). This reaction is light-independent. The NB-protein (BchN-BchB) is the catalytic component of the complex. The polypeptide is Light-independent protochlorophyllide reductase subunit B (Chloroflexus aggregans (strain MD-66 / DSM 9485)).